We begin with the raw amino-acid sequence, 395 residues long: Elongation factor Tu (395 aa).

The region spanning 10 to 204 is the tr-type G domain; it reads KPHVNVGTIG…AVDEYIPEPV (195 aa). The interval 19 to 26 is G1; that stretch reads GHVDHGKT. 19 to 26 serves as a coordination point for GTP; the sequence is GHVDHGKT. T26 contacts Mg(2+). The G2 stretch occupies residues 60–64; that stretch reads GITIA. Positions 81-84 are G3; the sequence is DCPG. Residues 81–85 and 136–139 contribute to the GTP site; these read DCPGH and NKVD. Positions 136–139 are G4; sequence NKVD. Residues 174 to 176 form a G5 region; the sequence is SAL.

It belongs to the TRAFAC class translation factor GTPase superfamily. Classic translation factor GTPase family. EF-Tu/EF-1A subfamily. In terms of assembly, monomer.

It localises to the cytoplasm. The enzyme catalyses GTP + H2O = GDP + phosphate + H(+). In terms of biological role, GTP hydrolase that promotes the GTP-dependent binding of aminoacyl-tRNA to the A-site of ribosomes during protein biosynthesis. The polypeptide is Elongation factor Tu (Exiguobacterium sp. (strain ATCC BAA-1283 / AT1b)).